The sequence spans 282 residues: Cell division protein DivIB (282 aa).

Residues 1 to 59 (MLDDRSAIEHHKYSQRLTELERRSAAAQQRQQKKKPPKMHVGNKIRGIKIKRYVSNGER) are Cytoplasmic-facing. Positions 19-41 (ELERRSAAAQQRQQKKKPPKMHV) are disordered. The segment covering 31–41 (QQKKKPPKMHV) has biased composition (basic residues). Residues 60–80 (VLKLVVLFSAILLFMLYIISP) form a helical membrane-spanning segment. At 81–282 (LSKITTLHVT…YSYDYGSKDK (202 aa)) the chain is on the extracellular side. The POTRA domain occupies 82–153 (SKITTLHVTG…QSLQISVKEN (72 aa)).

Belongs to the FtsQ/DivIB family. DivIB subfamily.

It localises to the cell membrane. Functionally, cell division protein that may be involved in stabilizing or promoting the assembly of the division complex. The sequence is that of Cell division protein DivIB from Limosilactobacillus reuteri (strain ATCC 55730 / SD2112) (Lactobacillus reuteri).